The following is a 400-amino-acid chain: Phosphoglycerate kinase (400 aa).

Substrate is bound by residues 19–21, R38, 61–64, R124, and R161; these read DLN and HLGR. Residues K211, G299, E330, and 356 to 359 contribute to the ATP site; that span reads GGDS.

Belongs to the phosphoglycerate kinase family. Monomer.

It localises to the cytoplasm. The enzyme catalyses (2R)-3-phosphoglycerate + ATP = (2R)-3-phospho-glyceroyl phosphate + ADP. The protein operates within carbohydrate degradation; glycolysis; pyruvate from D-glyceraldehyde 3-phosphate: step 2/5. This Frankia alni (strain DSM 45986 / CECT 9034 / ACN14a) protein is Phosphoglycerate kinase.